The following is a 691-amino-acid chain: Elongation factor G (691 aa).

The 275-residue stretch at 8 to 282 folds into the tr-type G domain; that stretch reads ERVRNIGIAA…AVVDYLPAPV (275 aa). Residues 17–24, 81–85, and 135–138 each bind GTP; these read AHIDAGKT, DTPGH, and NKMD.

The protein belongs to the TRAFAC class translation factor GTPase superfamily. Classic translation factor GTPase family. EF-G/EF-2 subfamily.

The protein resides in the cytoplasm. Functionally, catalyzes the GTP-dependent ribosomal translocation step during translation elongation. During this step, the ribosome changes from the pre-translocational (PRE) to the post-translocational (POST) state as the newly formed A-site-bound peptidyl-tRNA and P-site-bound deacylated tRNA move to the P and E sites, respectively. Catalyzes the coordinated movement of the two tRNA molecules, the mRNA and conformational changes in the ribosome. The sequence is that of Elongation factor G from Prochlorococcus marinus (strain MIT 9312).